We begin with the raw amino-acid sequence, 608 residues long: Phosphomethylpyrimidine synthase (608 aa).

Substrate is bound by residues Asn-216, Met-245, Tyr-274, His-310, 330–332, 371–374, and Glu-410; these read SRG and DGLR. Position 414 (His-414) interacts with Zn(2+). Tyr-437 is a substrate binding site. Residue His-478 participates in Zn(2+) binding. Residues Cys-558, Cys-561, and Cys-566 each coordinate [4Fe-4S] cluster.

This sequence belongs to the ThiC family. Homodimer. [4Fe-4S] cluster serves as cofactor.

The enzyme catalyses 5-amino-1-(5-phospho-beta-D-ribosyl)imidazole + S-adenosyl-L-methionine = 4-amino-2-methyl-5-(phosphooxymethyl)pyrimidine + CO + 5'-deoxyadenosine + formate + L-methionine + 3 H(+). Its pathway is cofactor biosynthesis; thiamine diphosphate biosynthesis. In terms of biological role, catalyzes the synthesis of the hydroxymethylpyrimidine phosphate (HMP-P) moiety of thiamine from aminoimidazole ribotide (AIR) in a radical S-adenosyl-L-methionine (SAM)-dependent reaction. The sequence is that of Phosphomethylpyrimidine synthase from Ruegeria sp. (strain TM1040) (Silicibacter sp.).